The sequence spans 375 residues: Anhydro-N-acetylmuramic acid kinase (375 aa).

G14–D21 lines the ATP pocket.

This sequence belongs to the anhydro-N-acetylmuramic acid kinase family.

It catalyses the reaction 1,6-anhydro-N-acetyl-beta-muramate + ATP + H2O = N-acetyl-D-muramate 6-phosphate + ADP + H(+). It functions in the pathway amino-sugar metabolism; 1,6-anhydro-N-acetylmuramate degradation. Its pathway is cell wall biogenesis; peptidoglycan recycling. Catalyzes the specific phosphorylation of 1,6-anhydro-N-acetylmuramic acid (anhMurNAc) with the simultaneous cleavage of the 1,6-anhydro ring, generating MurNAc-6-P. Is required for the utilization of anhMurNAc either imported from the medium or derived from its own cell wall murein, and thus plays a role in cell wall recycling. This chain is Anhydro-N-acetylmuramic acid kinase, found in Cupriavidus pinatubonensis (strain JMP 134 / LMG 1197) (Cupriavidus necator (strain JMP 134)).